Reading from the N-terminus, the 875-residue chain is Serine/threonine-protein kinase D2 (875 aa).

The span at 1–12 (MAAAPSHPAGLP) shows a compositional bias: low complexity. The segment at 1-35 (MAAAPSHPAGLPGSPGPGSPPPPGGLDLQSPPPLL) is disordered. Residues 14-35 (SPGPGSPPPPGGLDLQSPPPLL) are compositionally biased toward pro residues. S30 bears the Phosphoserine mark. Phosphotyrosine is present on Y87. The Phorbol-ester/DAG-type 1 zinc finger occupies 138–188 (PHALTVHSYRAPAFCDHCGEMLFGLVRQGLKCDGCGLNYHKRCAFSIPNNC). Phosphoserine occurs at positions 197, 198, 200, 203, 206, 211, 212, and 214. Positions 224–247 (RSTTDLLPRRPPSSSSSSSSSSFY) are disordered. The segment covering 236–245 (SSSSSSSSSS) has biased composition (low complexity). S244 is modified (phosphoserine; by CSNK1D and CSNK1E). Position 245 is a phosphoserine (S245). The segment at 265 to 315 (PHTFLIHSYTRPTVCQACKKLLKGLFRQGLQCKDCKFNCHKRCATRVPNDC) adopts a Phorbol-ester/DAG-type 2 zinc-finger fold. Positions 332–374 (DYSEADKSSISDELEDSGVIPGSHSESALHASEEEEGEGHKAQ) are disordered. In terms of domain architecture, PH spans 398–510 (TTLREGWVVH…WETAIRQALM (113 aa)). Phosphotyrosine is present on Y408. Y439 bears the Phosphotyrosine; by ABL1 mark. A Phosphoserine modification is found at S519. In terms of domain architecture, Protein kinase spans 552–808 (IFPDEVLGSG…VDKSLSHPWL (257 aa)). ATP is bound by residues 558-566 (LGSGQFGVV) and K581. D675 functions as the Proton acceptor in the catalytic mechanism. Phosphoserine; by PKC is present on S707. S711 carries the post-translational modification Phosphoserine; by autocatalysis. Position 718 is a phosphotyrosine; by ABL1 (Y718). The short motif at 725 to 727 (LNQ) is the Important for ABL1-mediated Tyr-718 phosphorylation element. At S873 the chain carries Phosphoserine; by autocatalysis.

This sequence belongs to the protein kinase superfamily. CAMK Ser/Thr protein kinase family. PKD subfamily. As to quaternary structure, interacts (via C-terminus) with LCK. Interacts (via N-terminus and zing-finger domain 1 and 2) with PRKCD in response to oxidative stress; the interaction is independent of PRKD2 tyrosine phosphorylation. It depends on Mg(2+) as a cofactor. Phosphorylation of Ser-873 correlates with the activation status of the kinase. Ser-707 is probably phosphorylated by PKC. Phosphorylation at Ser-244 by CSNK1D and CSNK1E promotes nuclear localization and substrate targeting. Phosphorylation at Ser-244, Ser-707 and Ser-711 is required for nuclear localization. Phosphorylated at Tyr-438 by ABL1 in response to oxidative stress. Phosphorylated at Tyr-718 by ABL1 specifically in response to oxidative stress; requires prior phosphorylation at Ser-707 or/and Ser-711.

It is found in the cytoplasm. The protein resides in the cell membrane. It localises to the golgi apparatus. Its subcellular location is the trans-Golgi network. It catalyses the reaction L-seryl-[protein] + ATP = O-phospho-L-seryl-[protein] + ADP + H(+). It carries out the reaction L-threonyl-[protein] + ATP = O-phospho-L-threonyl-[protein] + ADP + H(+). Activated by DAG and phorbol esters. Phorbol-ester/DAG-type domains bind DAG, mediating translocation to membranes. Autophosphorylation of Ser-711 and phosphorylation of Ser-707 by PKC relieves auto-inhibition by the PH domain. Catalytic activity is further increased by phosphorylation at Tyr-718 in response to oxidative stress. Serine/threonine-protein kinase that converts transient diacylglycerol (DAG) signals into prolonged physiological effects downstream of PKC, and is involved in the regulation of cell proliferation via MAPK1/3 (ERK1/2) signaling, oxidative stress-induced NF-kappa-B activation, inhibition of HDAC7 transcriptional repression, signaling downstream of T-cell antigen receptor (TCR) and cytokine production, and plays a role in Golgi membrane trafficking, angiogenesis, secretory granule release and cell adhesion. May potentiate mitogenesis induced by the neuropeptide bombesin by mediating an increase in the duration of MAPK1/3 (ERK1/2) signaling, which leads to accumulation of immediate-early gene products including FOS that stimulate cell cycle progression. In response to oxidative stress, is phosphorylated at Tyr-438 and Tyr-718 by ABL1, which leads to the activation of PRKD2 without increasing its catalytic activity, and mediates activation of NF-kappa-B. In response to the activation of the gastrin receptor CCKBR, is phosphorylated at Ser-244 by CSNK1D and CSNK1E, translocates to the nucleus, phosphorylates HDAC7, leading to nuclear export of HDAC7 and inhibition of HDAC7 transcriptional repression of NR4A1/NUR77. Upon TCR stimulation, is activated independently of ZAP70, translocates from the cytoplasm to the nucleus and is required for interleukin-2 (IL2) promoter up-regulation. During adaptive immune responses, is required in peripheral T-lymphocytes for the production of the effector cytokines IL2 and IFNG after TCR engagement and for optimal induction of antibody responses to antigens. In epithelial cells stimulated with lysophosphatidic acid (LPA), is activated through a PKC-dependent pathway and mediates LPA-stimulated interleukin-8 (IL8) secretion via a NF-kappa-B-dependent pathway. During TCR-induced T-cell activation, interacts with and is activated by the tyrosine kinase LCK, which results in the activation of the NFAT transcription factors. In the trans-Golgi network (TGN), regulates the fission of transport vesicles that are on their way to the plasma membrane and in polarized cells is involved in the transport of proteins from the TGN to the basolateral membrane. Plays an important role in endothelial cell proliferation and migration prior to angiogenesis, partly through modulation of the expression of KDR/VEGFR2 and FGFR1, two key growth factor receptors involved in angiogenesis. In secretory pathway, is required for the release of chromogranin-A (CHGA)-containing secretory granules from the TGN. Downstream of PRKCA, plays important roles in angiotensin-2-induced monocyte adhesion to endothelial cells. In Mus musculus (Mouse), this protein is Serine/threonine-protein kinase D2 (Prkd2).